A 306-amino-acid chain; its full sequence is Glutaminase (306 aa).

The substrate site is built by Ser-64, Asn-115, Glu-159, Asn-166, Tyr-190, Tyr-242, and Val-260.

This sequence belongs to the glutaminase family. Homotetramer.

The catalysed reaction is L-glutamine + H2O = L-glutamate + NH4(+). The chain is Glutaminase from Aeromonas salmonicida (strain A449).